A 160-amino-acid polypeptide reads, in one-letter code: Transcription elongation factor GreA (160 aa).

A coiled-coil region spans residues 1-71 (MAEKTYPMTK…GQISTLETQI (71 aa)).

The protein belongs to the GreA/GreB family.

Functionally, necessary for efficient RNA polymerase transcription elongation past template-encoded arresting sites. The arresting sites in DNA have the property of trapping a certain fraction of elongating RNA polymerases that pass through, resulting in locked ternary complexes. Cleavage of the nascent transcript by cleavage factors such as GreA or GreB allows the resumption of elongation from the new 3'terminus. GreA releases sequences of 2 to 3 nucleotides. The protein is Transcription elongation factor GreA of Streptococcus uberis (strain ATCC BAA-854 / 0140J).